Reading from the N-terminus, the 232-residue chain is 2-C-methyl-D-erythritol 4-phosphate cytidylyltransferase (232 aa).

The protein belongs to the IspD/TarI cytidylyltransferase family. IspD subfamily.

It catalyses the reaction 2-C-methyl-D-erythritol 4-phosphate + CTP + H(+) = 4-CDP-2-C-methyl-D-erythritol + diphosphate. It functions in the pathway isoprenoid biosynthesis; isopentenyl diphosphate biosynthesis via DXP pathway; isopentenyl diphosphate from 1-deoxy-D-xylulose 5-phosphate: step 2/6. Catalyzes the formation of 4-diphosphocytidyl-2-C-methyl-D-erythritol from CTP and 2-C-methyl-D-erythritol 4-phosphate (MEP). This Vibrio cholerae serotype O1 (strain ATCC 39315 / El Tor Inaba N16961) protein is 2-C-methyl-D-erythritol 4-phosphate cytidylyltransferase.